We begin with the raw amino-acid sequence, 82 residues long: ATP synthase subunit c (82 aa).

The next 2 membrane-spanning stretches (helical) occupy residues 3-23 and 57-77; these read PLVASASVLAAALAIGLASLG and LAFMESLTIYGLVIALVLLFA.

This sequence belongs to the ATPase C chain family. F-type ATPases have 2 components, F(1) - the catalytic core - and F(0) - the membrane proton channel. F(1) has five subunits: alpha(3), beta(3), gamma(1), delta(1), epsilon(1). F(0) has four main subunits: a(1), b(1), b'(1) and c(10-14). The alpha and beta chains form an alternating ring which encloses part of the gamma chain. F(1) is attached to F(0) by a central stalk formed by the gamma and epsilon chains, while a peripheral stalk is formed by the delta, b and b' chains.

The protein localises to the cellular thylakoid membrane. In terms of biological role, f(1)F(0) ATP synthase produces ATP from ADP in the presence of a proton or sodium gradient. F-type ATPases consist of two structural domains, F(1) containing the extramembraneous catalytic core and F(0) containing the membrane proton channel, linked together by a central stalk and a peripheral stalk. During catalysis, ATP synthesis in the catalytic domain of F(1) is coupled via a rotary mechanism of the central stalk subunits to proton translocation. Functionally, key component of the F(0) channel; it plays a direct role in translocation across the membrane. A homomeric c-ring of between 10-14 subunits forms the central stalk rotor element with the F(1) delta and epsilon subunits. The chain is ATP synthase subunit c from Synechococcus sp. (strain PCC 6716).